We begin with the raw amino-acid sequence, 83 residues long: Phosphoribosylformylglycinamidine synthase subunit PurS (83 aa).

The protein belongs to the PurS family. Homodimer. Part of the FGAM synthase complex composed of 1 PurL, 1 PurQ and 2 PurS subunits.

It is found in the cytoplasm. It catalyses the reaction N(2)-formyl-N(1)-(5-phospho-beta-D-ribosyl)glycinamide + L-glutamine + ATP + H2O = 2-formamido-N(1)-(5-O-phospho-beta-D-ribosyl)acetamidine + L-glutamate + ADP + phosphate + H(+). The protein operates within purine metabolism; IMP biosynthesis via de novo pathway; 5-amino-1-(5-phospho-D-ribosyl)imidazole from N(2)-formyl-N(1)-(5-phospho-D-ribosyl)glycinamide: step 1/2. In terms of biological role, part of the phosphoribosylformylglycinamidine synthase complex involved in the purines biosynthetic pathway. Catalyzes the ATP-dependent conversion of formylglycinamide ribonucleotide (FGAR) and glutamine to yield formylglycinamidine ribonucleotide (FGAM) and glutamate. The FGAM synthase complex is composed of three subunits. PurQ produces an ammonia molecule by converting glutamine to glutamate. PurL transfers the ammonia molecule to FGAR to form FGAM in an ATP-dependent manner. PurS interacts with PurQ and PurL and is thought to assist in the transfer of the ammonia molecule from PurQ to PurL. This chain is Phosphoribosylformylglycinamidine synthase subunit PurS, found in Methanocaldococcus jannaschii (strain ATCC 43067 / DSM 2661 / JAL-1 / JCM 10045 / NBRC 100440) (Methanococcus jannaschii).